Reading from the N-terminus, the 290-residue chain is tRNA(Ile)-lysidine synthase, chloroplastic (290 aa).

An ATP-binding site is contributed by 33-38 (SGGQDS).

It belongs to the tRNA(Ile)-lysidine synthase family.

The protein localises to the plastid. It localises to the chloroplast. The catalysed reaction is cytidine(34) in tRNA(Ile2) + L-lysine + ATP = lysidine(34) in tRNA(Ile2) + AMP + diphosphate + H(+). Functionally, ligates lysine onto the cytidine present at position 34 of the AUA codon-specific tRNA(Ile) that contains the anticodon CAU, in an ATP-dependent manner. Cytidine is converted to lysidine, thus changing the amino acid specificity of the tRNA from methionine to isoleucine. The polypeptide is tRNA(Ile)-lysidine synthase, chloroplastic (Cyanidioschyzon merolae (strain NIES-3377 / 10D) (Unicellular red alga)).